Consider the following 378-residue polypeptide: Mannitol-1-phosphate 5-dehydrogenase (378 aa).

4 to 15 is an NAD(+) binding site; sequence SVHFGAGNIGRG.

Belongs to the mannitol dehydrogenase family.

The enzyme catalyses D-mannitol 1-phosphate + NAD(+) = beta-D-fructose 6-phosphate + NADH + H(+). The sequence is that of Mannitol-1-phosphate 5-dehydrogenase from Streptococcus pneumoniae (strain ATCC BAA-255 / R6).